Here is a 140-residue protein sequence, read N- to C-terminus: Small ribosomal subunit protein uS11c (140 aa).

It belongs to the universal ribosomal protein uS11 family. As to quaternary structure, part of the 30S ribosomal subunit.

The protein localises to the plastid. It localises to the chloroplast. In Pelargonium hortorum (Common geranium), this protein is Small ribosomal subunit protein uS11c.